We begin with the raw amino-acid sequence, 598 residues long: Transcription factor dpl-1 (598 aa).

Disordered regions lie at residues 1 to 73, 435 to 457, and 573 to 598; these read MNPT…PTGL, NRPYSTVPPDRRLSTGATSVNSG, and TEQPMTSAQAAALIQHPQPEEYDYFQ. Residues 13 to 22 show a composition bias toward polar residues; sequence PAQSRPQVSL. The segment covering 55 to 64 has biased composition (gly residues); the sequence is GVGGSSGAGG.

The protein belongs to the E2F/DP family. In terms of assembly, component of the DRM complex, at least composed of lin-9, lin-35, lin-37, lin-52, lin-53, lin-54- dpl-1 and efl-1. Interacts (via N-terminus) with efl-1. Interacts (via C-terminus) with lin-35 (via C-terminus).

It is found in the nucleus. Its function is as follows. Synthetic multivulva class B (synMuvB) protein. SynMuvB proteins are required to repress the induction of vulval development by Ras signaling and probably act by forming the multiprotein DRM complex that represses transcription. May also negatively regulate vulval development in association with other SynMuv class B proteins such as lin-15A. Can stimulate E2F-dependent transcription. Plays a role in negatively regulating the progression through the G1 phase of the cell cycle during postembryonic development, most likely by acting as a transcriptional repressor in association with the cell cycle regulatory factor efl-1 and the transcriptional repressor lin-35, but may also act as a positive regulator of cell cycle entry. Involved in the regulation of intestinal cell division during postembryonic development, most likely in complex with efl-1 and lin-35. Promotes germ cell programmed cell death, probably together with efl-1, by positively regulating the expression of the apoptosis proteins ced-3 and ced-4. In particular, positively regulates the expression of ced-4 in response to starvation. Its role in programmed cell death may be in conjunction with cell cycle regulatory factor efl-1 and the synthetic multivulva class B proteins lin-35, lin-37 and lin-52, and is independent of the ced-1, ced-8 and ced-9 pathways. The chain is Transcription factor dpl-1 from Caenorhabditis elegans.